Here is a 318-residue protein sequence, read N- to C-terminus: Aspartate carbamoyltransferase catalytic subunit (318 aa).

The carbamoyl phosphate site is built by R55 and T56. K83 contributes to the L-aspartate binding site. Residues R105, H138, and Q141 each coordinate carbamoyl phosphate. L-aspartate is bound by residues R171 and R225. Residues G266 and P267 each contribute to the carbamoyl phosphate site.

It belongs to the aspartate/ornithine carbamoyltransferase superfamily. ATCase family. Heterododecamer (2C3:3R2) of six catalytic PyrB chains organized as two trimers (C3), and six regulatory PyrI chains organized as three dimers (R2).

It carries out the reaction carbamoyl phosphate + L-aspartate = N-carbamoyl-L-aspartate + phosphate + H(+). It participates in pyrimidine metabolism; UMP biosynthesis via de novo pathway; (S)-dihydroorotate from bicarbonate: step 2/3. Its function is as follows. Catalyzes the condensation of carbamoyl phosphate and aspartate to form carbamoyl aspartate and inorganic phosphate, the committed step in the de novo pyrimidine nucleotide biosynthesis pathway. This chain is Aspartate carbamoyltransferase catalytic subunit, found in Corynebacterium kroppenstedtii (strain DSM 44385 / JCM 11950 / CIP 105744 / CCUG 35717).